Reading from the N-terminus, the 324-residue chain is MRRAARASAPGKVIIVGEHFVVRGSLAIVAAIGRRLRVTVRSGGKGIVLESSMLGRHSAPLPGQGAAAKVSPVLEPYIAVLRSLAARGYSVVPHTILVESGIPPRAGLGSSAASMVAYALSYSAMHGDPLSAEDLYSVAMEGEKIAHGKPSGVDVTIAVRGGVLAYRRGENPVDIRPGLTGVTLLVADTGVERRTRDVVEHVLSIADALGEASTYIYRAADLIAREALHAIEKGDAERLGLIMNAAQGLLSSLGASSLEIETLVYRMRSAGALGAKLTGAGWGGCVIGLFKEGEVERGLESVVESSSQAFTASIAEEGARLEEF.

103-113 (PPRAGLGSSAA) contributes to the ATP binding site. The active-site Proton acceptor is Asp-154.

It belongs to the GHMP kinase family. Mevalonate kinase subfamily. As to quaternary structure, homodimer. The cofactor is Mg(2+).

It localises to the cytoplasm. The enzyme catalyses (R)-mevalonate + ATP = (R)-5-phosphomevalonate + ADP + H(+). Its pathway is isoprenoid biosynthesis; isopentenyl diphosphate biosynthesis via mevalonate pathway; isopentenyl diphosphate from (R)-mevalonate: step 1/3. In terms of biological role, catalyzes the phosphorylation of (R)-mevalonate (MVA) to (R)-mevalonate 5-phosphate (MVAP). Functions in the mevalonate (MVA) pathway leading to isopentenyl diphosphate (IPP), a key precursor for the biosynthesis of isoprenoid compounds such as archaeal membrane lipids. This is Mevalonate kinase from Aeropyrum pernix (strain ATCC 700893 / DSM 11879 / JCM 9820 / NBRC 100138 / K1).